Here is a 168-residue protein sequence, read N- to C-terminus: Disulfide bond formation protein B (168 aa).

The Cytoplasmic portion of the chain corresponds to Met-1–Ile-6. A helical membrane pass occupies residues Phe-7–Tyr-23. At Met-24 to Phe-41 the chain is on the periplasmic side. Cys-33 and Cys-36 are oxidised to a cystine. A helical transmembrane segment spans residues Gly-42–Pro-58. Over Arg-59–Val-65 the chain is Cytoplasmic. A helical membrane pass occupies residues Tyr-66–Gly-82. The Periplasmic segment spans residues Arg-83–Gly-139. Cys-98 and Cys-125 are disulfide-bonded. A helical transmembrane segment spans residues Trp-140–Arg-158. The Cytoplasmic segment spans residues Arg-159 to Ser-168.

It belongs to the DsbB family.

It localises to the cell inner membrane. In terms of biological role, required for disulfide bond formation in some periplasmic proteins. Acts by oxidizing the DsbA protein. The protein is Disulfide bond formation protein B of Marinobacter nauticus (strain ATCC 700491 / DSM 11845 / VT8) (Marinobacter aquaeolei).